Consider the following 63-residue polypeptide: Cytochrome c oxidase subunit 5C (63 aa).

The chain crosses the membrane as a helical span at residues 16-34 (VVKEICIGLTLGLVAGGLW).

This sequence belongs to the cytochrome c oxidase subunit 5C family.

The protein resides in the mitochondrion inner membrane. Its function is as follows. This protein is one of the nuclear-coded polypeptide chains of cytochrome c oxidase, the terminal oxidase in mitochondrial electron transport. The polypeptide is Cytochrome c oxidase subunit 5C (COX5C) (Oryza sativa subsp. japonica (Rice)).